A 125-amino-acid chain; its full sequence is Putative oxygen-evolving enhancer protein 2-2 (125 aa).

Serine 15 is subject to Phosphoserine.

Belongs to the PsbP family.

In Arabidopsis thaliana (Mouse-ear cress), this protein is Putative oxygen-evolving enhancer protein 2-2 (PSBP2).